A 402-amino-acid polypeptide reads, in one-letter code: Putative F-box protein At4g22180 (402 aa).

An F-box domain is found at 18-64 (PNSWSELPLDLLTAVFERLSYANFQRAKSVCSSWHSGSRQSVPIQIP).

This chain is Putative F-box protein At4g22180, found in Arabidopsis thaliana (Mouse-ear cress).